A 454-amino-acid chain; its full sequence is Mogroside I-E synthase (454 aa).

Residue His18 is the Proton acceptor of the active site. Position 18 (His18) interacts with an anthocyanidin. Catalysis depends on Asp111, which acts as the Charge relay. His144 provides a ligand contact to an anthocyanidin. A disulfide bridge links Cys259 with Cys331. Positions 278, 331, 333, 351, 352, 353, and 356 each coordinate UDP-alpha-D-glucose. Ala371 lines the an anthocyanidin pocket. Asp372 and Gln373 together coordinate UDP-alpha-D-glucose.

Belongs to the UDP-glycosyltransferase family. Highly expressed in young fruits 15 days after anthesis (15-DAA).

It catalyses the reaction mogrol + UDP-alpha-D-glucose = mogroside IE + UDP + H(+). It participates in secondary metabolite biosynthesis; terpenoid biosynthesis. Its activity is regulated as follows. Activity is increased by Mg(2+). Its function is as follows. UDP-glycosyltransferase involved in the biosynthesis of cucurbitacin and mogroside tetracyclic triterpene natural products (e.g. siamenoside I and mogrosides IV, V and VI). Cucurbitacins have cytotoxic properties and exhibit deterrent taste as a defense barrier against herbivores. Mogrosides are nonsugar highly oxygenated compounds used as high-intensity zero-calorie sweeteners; they also possess pharmacological properties such as regulating immunity, lowering blood sugar and lipid levels, protecting the liver, and acting as antioxidants and antitumor agents. Catalyzes the transfer of a glucose moiety to the C-3 hydroxyl of mogrol to form mogroside I-E. Besides mogrol, UGT74AC1 also shows activity in vitro with quercetin and naringenin as substrate. This chain is Mogroside I-E synthase, found in Siraitia grosvenorii (Monk's fruit).